Here is a 365-residue protein sequence, read N- to C-terminus: 3-dehydroquinate synthase (365 aa).

NAD(+) contacts are provided by residues 106 to 110 (GVIGD), 130 to 131 (TT), K142, K151, and 169 to 172 (FFAT). Residues E184, H247, and H264 each contribute to the Zn(2+) site.

Belongs to the sugar phosphate cyclases superfamily. Dehydroquinate synthase family. Co(2+) is required as a cofactor. It depends on Zn(2+) as a cofactor. The cofactor is NAD(+).

The protein resides in the cytoplasm. The catalysed reaction is 7-phospho-2-dehydro-3-deoxy-D-arabino-heptonate = 3-dehydroquinate + phosphate. The protein operates within metabolic intermediate biosynthesis; chorismate biosynthesis; chorismate from D-erythrose 4-phosphate and phosphoenolpyruvate: step 2/7. Its function is as follows. Catalyzes the conversion of 3-deoxy-D-arabino-heptulosonate 7-phosphate (DAHP) to dehydroquinate (DHQ). The protein is 3-dehydroquinate synthase of Listeria monocytogenes serotype 4a (strain HCC23).